The following is a 306-amino-acid chain: MATH domain and coiled-coil domain-containing protein At3g29580 (306 aa).

The MATH domain maps to 6 to 132 (DNKFTWVIKN…NGEIKIVVEF (127 aa)). A coiled-coil region spans residues 253-298 (FKLDWLEKKLNEVLEKKEKEESYETRMREIEEEMKDLKAKALDVGA).

This chain is MATH domain and coiled-coil domain-containing protein At3g29580, found in Arabidopsis thaliana (Mouse-ear cress).